Consider the following 170-residue polypeptide: Calcineurin subunit B type 2 (170 aa).

Gly2 carries the N-myristoyl glycine lipid modification. EF-hand domains are found at residues 18 to 46 (DEIKRLGRRFKKLDLDKSGSLSVEEFMSL), 50 to 85 (RHNPLVRRVIDVFDTDGDGEVDFKEFILGTSQFSVK), 87 to 122 (DEEQKLRFAFSIYDMDKDGYISNGELFQVLKMMVGN), and 128 to 163 (QLQQLVDKTIIILDKDGDGKISFEEFSAVVRDLEIH). Positions 31, 33, 35, 37, 42, 63, 65, 67, 69, 74, 100, 102, 104, 106, and 111 each coordinate Ca(2+). The interval 131–136 (QLVDKT) is calcineurin A binding. Ca(2+)-binding residues include Asp141, Asp143, Asp145, Lys147, and Glu152.

This sequence belongs to the calcineurin regulatory subunit family. Forms a complex composed of a calmodulin-dependent catalytic subunit (also known as calcineurin A) and a regulatory Ca(2+)-binding subunit (also known as calcineurin B). There are three catalytic subunits, each encoded by a separate gene (PPP3CA, PPP3CB, and PPP3CC) and two regulatory subunits which are also encoded by separate genes (PPP3R1 and PPP3R2). Interacts with SPATA33 (via PQIIIT motif). In terms of tissue distribution, testis-specific.

Its subcellular location is the mitochondrion. Functionally, regulatory subunit of calcineurin, a calcium-dependent, calmodulin stimulated protein phosphatase. Confers calcium sensitivity. This Homo sapiens (Human) protein is Calcineurin subunit B type 2 (PPP3R2).